A 114-amino-acid chain; its full sequence is Large ribosomal subunit protein uL22c (114 aa).

The protein belongs to the universal ribosomal protein uL22 family. As to quaternary structure, part of the 50S ribosomal subunit.

It localises to the plastid. The protein resides in the chloroplast. This protein binds specifically to 23S rRNA. In terms of biological role, the globular domain of the protein is located near the polypeptide exit tunnel on the outside of the subunit, while an extended beta-hairpin is found that lines the wall of the exit tunnel in the center of the 70S ribosome. The sequence is that of Large ribosomal subunit protein uL22c (rpl22) from Gracilaria tenuistipitata (Red alga).